We begin with the raw amino-acid sequence, 474 residues long: Serine/threonine-protein kinase ksp1 (474 aa).

The Protein kinase domain maps to 9-280 (YKVERPLNKG…EAVLAVTKWT (272 aa)). Residues 15–23 (LNKGSYGTV) and Lys-43 each bind ATP. Asp-137 serves as the catalytic Proton acceptor. Positions 345–373 (VDENISTSSSPRSPASLAPVNNSERSYDS) are disordered. The span at 350 to 363 (STSSSPRSPASLAP) shows a compositional bias: low complexity. Phosphoserine is present on residues Ser-353, Ser-354, Ser-357, Ser-378, Ser-404, and Ser-413.

Belongs to the protein kinase superfamily. Ser/Thr protein kinase family.

The protein localises to the cytoplasm. The protein resides in the nucleus. The catalysed reaction is L-seryl-[protein] + ATP = O-phospho-L-seryl-[protein] + ADP + H(+). The enzyme catalyses L-threonyl-[protein] + ATP = O-phospho-L-threonyl-[protein] + ADP + H(+). The protein is Serine/threonine-protein kinase ksp1 (ksp1) of Schizosaccharomyces pombe (strain 972 / ATCC 24843) (Fission yeast).